Consider the following 355-residue polypeptide: Probable dual-specificity RNA methyltransferase RlmN (355 aa).

The Proton acceptor role is filled by glutamate 107. One can recognise a Radical SAM core domain in the interval 113–341 (TDKRLTVCVS…VSVRYSRGLE (229 aa)). Cysteine 120 and cysteine 346 are disulfide-bonded. [4Fe-4S] cluster-binding residues include cysteine 127, cysteine 131, and cysteine 134. Residues 174 to 175 (GE), serine 204, 227 to 229 (SLH), and asparagine 303 each bind S-adenosyl-L-methionine. The S-methylcysteine intermediate role is filled by cysteine 346.

The protein belongs to the radical SAM superfamily. RlmN family. Requires [4Fe-4S] cluster as cofactor.

It localises to the cytoplasm. The catalysed reaction is adenosine(2503) in 23S rRNA + 2 reduced [2Fe-2S]-[ferredoxin] + 2 S-adenosyl-L-methionine = 2-methyladenosine(2503) in 23S rRNA + 5'-deoxyadenosine + L-methionine + 2 oxidized [2Fe-2S]-[ferredoxin] + S-adenosyl-L-homocysteine. The enzyme catalyses adenosine(37) in tRNA + 2 reduced [2Fe-2S]-[ferredoxin] + 2 S-adenosyl-L-methionine = 2-methyladenosine(37) in tRNA + 5'-deoxyadenosine + L-methionine + 2 oxidized [2Fe-2S]-[ferredoxin] + S-adenosyl-L-homocysteine. In terms of biological role, specifically methylates position 2 of adenine 2503 in 23S rRNA and position 2 of adenine 37 in tRNAs. The protein is Probable dual-specificity RNA methyltransferase RlmN of Trichormus variabilis (strain ATCC 29413 / PCC 7937) (Anabaena variabilis).